Here is a 226-residue protein sequence, read N- to C-terminus: Enolase-phosphatase E1 (226 aa).

Belongs to the HAD-like hydrolase superfamily. MasA/MtnC family. Monomer. Mg(2+) serves as cofactor.

It carries out the reaction 5-methylsulfanyl-2,3-dioxopentyl phosphate + H2O = 1,2-dihydroxy-5-(methylsulfanyl)pent-1-en-3-one + phosphate. It participates in amino-acid biosynthesis; L-methionine biosynthesis via salvage pathway; L-methionine from S-methyl-5-thio-alpha-D-ribose 1-phosphate: step 3/6. Its pathway is amino-acid biosynthesis; L-methionine biosynthesis via salvage pathway; L-methionine from S-methyl-5-thio-alpha-D-ribose 1-phosphate: step 4/6. In terms of biological role, bifunctional enzyme that catalyzes the enolization of 2,3-diketo-5-methylthiopentyl-1-phosphate (DK-MTP-1-P) into the intermediate 2-hydroxy-3-keto-5-methylthiopentenyl-1-phosphate (HK-MTPenyl-1-P), which is then dephosphorylated to form the acireductone 1,2-dihydroxy-3-keto-5-methylthiopentene (DHK-MTPene). This Shewanella pealeana (strain ATCC 700345 / ANG-SQ1) protein is Enolase-phosphatase E1.